We begin with the raw amino-acid sequence, 264 residues long: 3-methyl-2-oxobutanoate hydroxymethyltransferase (264 aa).

Mg(2+) contacts are provided by Asp45 and Asp84. Residues 45-46 (DS), Asp84, and Lys112 each bind 3-methyl-2-oxobutanoate. Residue Glu114 participates in Mg(2+) binding. The active-site Proton acceptor is the Glu181.

The protein belongs to the PanB family. As to quaternary structure, homodecamer; pentamer of dimers. Mg(2+) is required as a cofactor.

The protein localises to the cytoplasm. The enzyme catalyses 3-methyl-2-oxobutanoate + (6R)-5,10-methylene-5,6,7,8-tetrahydrofolate + H2O = 2-dehydropantoate + (6S)-5,6,7,8-tetrahydrofolate. The protein operates within cofactor biosynthesis; (R)-pantothenate biosynthesis; (R)-pantoate from 3-methyl-2-oxobutanoate: step 1/2. In terms of biological role, catalyzes the reversible reaction in which hydroxymethyl group from 5,10-methylenetetrahydrofolate is transferred onto alpha-ketoisovalerate to form ketopantoate. This chain is 3-methyl-2-oxobutanoate hydroxymethyltransferase, found in Escherichia coli O81 (strain ED1a).